Consider the following 258-residue polypeptide: MGVEKIIAAFENGKKAFIPYVMGGDGGLEKLKERIRFLDEAGASIVEIGIPFSDPVADGPTIQRAGKRALDSGVTLKGIFQALIEVRQEVQIPFVLMTYLNPVLAFGKERFIESCLEAGVDGIIVPDLPYEEQDIIAPLLRVANIALIPLVTVTSPIERIEKITSESQGFVYAVTVAGVTGVRQNFKDEIRSYLEKVKEHVHLPVVAGFGISTREQIEEMITICDGVVVGSKVIELLENEKREEICELIHAVKETEEA.

Active-site proton acceptor residues include glutamate 47 and aspartate 58.

It belongs to the TrpA family. As to quaternary structure, tetramer of two alpha and two beta chains.

It catalyses the reaction (1S,2R)-1-C-(indol-3-yl)glycerol 3-phosphate + L-serine = D-glyceraldehyde 3-phosphate + L-tryptophan + H2O. It functions in the pathway amino-acid biosynthesis; L-tryptophan biosynthesis; L-tryptophan from chorismate: step 5/5. Functionally, the alpha subunit is responsible for the aldol cleavage of indoleglycerol phosphate to indole and glyceraldehyde 3-phosphate. The protein is Tryptophan synthase alpha chain of Bacillus mycoides (strain KBAB4) (Bacillus weihenstephanensis).